The primary structure comprises 129 residues: Small ribosomal subunit protein uS9 (129 aa).

Over residues 104–113 the composition is skewed to basic and acidic residues; sequence TRDSRVVERK. The interval 104-129 is disordered; that stretch reads TRDSRVVERKKPGKRKARRSRQFSKR. Over residues 114–129 the composition is skewed to basic residues; the sequence is KPGKRKARRSRQFSKR.

This sequence belongs to the universal ribosomal protein uS9 family.

This Sulfurimonas denitrificans (strain ATCC 33889 / DSM 1251) (Thiomicrospira denitrificans (strain ATCC 33889 / DSM 1251)) protein is Small ribosomal subunit protein uS9.